The sequence spans 266 residues: Undecaprenyl-diphosphatase (266 aa).

The next 7 helical transmembrane spans lie at 39-59 (PGAS…AYYF), 86-106 (SIFI…IFIP), 112-132 (VLRS…FMYL), 147-167 (NFSN…PGVS), 189-209 (FSFL…FVSS), 216-236 (LGFF…LLAI), and 246-266 (NGLK…LLNL).

This sequence belongs to the UppP family.

It localises to the cell inner membrane. The enzyme catalyses di-trans,octa-cis-undecaprenyl diphosphate + H2O = di-trans,octa-cis-undecaprenyl phosphate + phosphate + H(+). Its function is as follows. Catalyzes the dephosphorylation of undecaprenyl diphosphate (UPP). Confers resistance to bacitracin. The protein is Undecaprenyl-diphosphatase of Prochlorococcus marinus (strain MIT 9301).